Reading from the N-terminus, the 320-residue chain is uncharacterized protein (320 aa).

Residue Arg61 is modified to Omega-N-methylarginine. The interval 299 to 320 (LHLQHQKQTSKDAGRQTPERKA) is disordered. Positions 307–320 (TSKDAGRQTPERKA) are enriched in basic and acidic residues. The residue at position 315 (Thr315) is a Phosphothreonine.

This is an uncharacterized protein from Mus musculus (Mouse).